We begin with the raw amino-acid sequence, 507 residues long: 2,3-bisphosphoglycerate-independent phosphoglycerate mutase (507 aa).

2 residues coordinate Mn(2+): Asp-13 and Ser-63. Catalysis depends on Ser-63, which acts as the Phosphoserine intermediate. Substrate contacts are provided by residues His-124, Arg-153–Asp-154, Arg-183, Arg-189, Arg-254–Arg-257, and Lys-330. Mn(2+)-binding residues include Asp-396, His-400, Asp-437, His-438, and His-456.

The protein belongs to the BPG-independent phosphoglycerate mutase family. In terms of assembly, monomer. It depends on Mn(2+) as a cofactor.

The catalysed reaction is (2R)-2-phosphoglycerate = (2R)-3-phosphoglycerate. It functions in the pathway carbohydrate degradation; glycolysis; pyruvate from D-glyceraldehyde 3-phosphate: step 3/5. Functionally, catalyzes the interconversion of 2-phosphoglycerate and 3-phosphoglycerate. The polypeptide is 2,3-bisphosphoglycerate-independent phosphoglycerate mutase (Paracoccus denitrificans (strain Pd 1222)).